We begin with the raw amino-acid sequence, 221 residues long: UPF0502 protein Sputw3181_2381 (221 aa).

This sequence belongs to the UPF0502 family.

This Shewanella sp. (strain W3-18-1) protein is UPF0502 protein Sputw3181_2381.